Here is a 488-residue protein sequence, read N- to C-terminus: Mannosylglycerate hydrolase MGH1 (488 aa).

Substrate is bound by residues Tyr-94, 98-101 (WNWD), Tyr-146, Gln-167, and Gly-227. Asp-229 serves as the catalytic Proton donor. Substrate-binding positions include Arg-262 and 415-416 (YW). Glu-459 (proton acceptor) is an active-site residue.

This sequence belongs to the glycosyl hydrolase 63 family.

It catalyses the reaction (2R)-2-O-(alpha-D-mannosyl)-glycerate + H2O = D-mannose + (R)-glycerate. The enzyme catalyses (2R)-2-O-(alpha-D-glucopyranosyl)-glycerate + H2O = (R)-glycerate + D-glucose. Activity is not dependent on divalent cations, but it is enhanced by Mn(2+). Its function is as follows. Catalyzes the hydrolysis of alpha-D-mannosyl-glycerate (MG) to D-glycerate and D-mannose. Can also hydrolyze alpha-D-glucopyranosyl-glycerate (GG)with lower efficiency. In Selaginella moellendorffii (Spikemoss), this protein is Mannosylglycerate hydrolase MGH1.